The sequence spans 356 residues: Protein-glutamate methylesterase/protein-glutamine glutaminase 2 (356 aa).

The Response regulatory domain occupies 4 to 121 (RALVVDDSAL…SQSMPEMAEE (118 aa)). Asp-55 is modified (4-aspartylphosphate). One can recognise a CheB-type methylesterase domain in the interval 161–356 (KAAPRNILAI…MAEEIIRIIG (196 aa)). Residues Ser-173, His-200, and Asp-300 contribute to the active site.

Belongs to the CheB family. In terms of processing, phosphorylated by CheA. Phosphorylation of the N-terminal regulatory domain activates the methylesterase activity.

The protein localises to the cytoplasm. It carries out the reaction [protein]-L-glutamate 5-O-methyl ester + H2O = L-glutamyl-[protein] + methanol + H(+). It catalyses the reaction L-glutaminyl-[protein] + H2O = L-glutamyl-[protein] + NH4(+). In terms of biological role, involved in chemotaxis. Part of a chemotaxis signal transduction system that modulates chemotaxis in response to various stimuli. Catalyzes the demethylation of specific methylglutamate residues introduced into the chemoreceptors (methyl-accepting chemotaxis proteins or MCP) by CheR. Also mediates the irreversible deamidation of specific glutamine residues to glutamic acid. The polypeptide is Protein-glutamate methylesterase/protein-glutamine glutaminase 2 (Methanosarcina acetivorans (strain ATCC 35395 / DSM 2834 / JCM 12185 / C2A)).